The chain runs to 110 residues: METIAKHRYARTSAQKARLVADLIRGKKVAQALEILTYTNKKASALVKKVLESAIANAEHNDGADIDDLKVAKIFVDEGPSMKRVMPRAKGRADRILKRTSHITVVVSDR.

It belongs to the universal ribosomal protein uL22 family. In terms of assembly, part of the 50S ribosomal subunit.

This protein binds specifically to 23S rRNA; its binding is stimulated by other ribosomal proteins, e.g. L4, L17, and L20. It is important during the early stages of 50S assembly. It makes multiple contacts with different domains of the 23S rRNA in the assembled 50S subunit and ribosome. Its function is as follows. The globular domain of the protein is located near the polypeptide exit tunnel on the outside of the subunit, while an extended beta-hairpin is found that lines the wall of the exit tunnel in the center of the 70S ribosome. This chain is Large ribosomal subunit protein uL22, found in Aggregatibacter actinomycetemcomitans (Actinobacillus actinomycetemcomitans).